The chain runs to 294 residues: Elongation factor Ts (294 aa).

Positions 80–83 are involved in Mg(2+) ion dislocation from EF-Tu; sequence TDFV.

Belongs to the EF-Ts family.

It is found in the cytoplasm. In terms of biological role, associates with the EF-Tu.GDP complex and induces the exchange of GDP to GTP. It remains bound to the aminoacyl-tRNA.EF-Tu.GTP complex up to the GTP hydrolysis stage on the ribosome. The polypeptide is Elongation factor Ts (Listeria innocua serovar 6a (strain ATCC BAA-680 / CLIP 11262)).